The primary structure comprises 241 residues: Ubiquinone biosynthesis O-methyltransferase (241 aa).

Residues arginine 46, glycine 66, aspartate 87, and methionine 131 each coordinate S-adenosyl-L-methionine.

This sequence belongs to the methyltransferase superfamily. UbiG/COQ3 family.

It carries out the reaction a 3-demethylubiquinol + S-adenosyl-L-methionine = a ubiquinol + S-adenosyl-L-homocysteine + H(+). The catalysed reaction is a 3-(all-trans-polyprenyl)benzene-1,2-diol + S-adenosyl-L-methionine = a 2-methoxy-6-(all-trans-polyprenyl)phenol + S-adenosyl-L-homocysteine + H(+). Its pathway is cofactor biosynthesis; ubiquinone biosynthesis. O-methyltransferase that catalyzes the 2 O-methylation steps in the ubiquinone biosynthetic pathway. The polypeptide is Ubiquinone biosynthesis O-methyltransferase (Bordetella pertussis (strain Tohama I / ATCC BAA-589 / NCTC 13251)).